We begin with the raw amino-acid sequence, 625 residues long: Arginine--tRNA ligase (625 aa).

The 'HIGH' region motif lies at 128–138; sequence VNPTKPLHMGH.

This sequence belongs to the class-I aminoacyl-tRNA synthetase family.

It is found in the cytoplasm. The enzyme catalyses tRNA(Arg) + L-arginine + ATP = L-arginyl-tRNA(Arg) + AMP + diphosphate. The sequence is that of Arginine--tRNA ligase (argS) from Pyrococcus abyssi (strain GE5 / Orsay).